Consider the following 815-residue polypeptide: Plakophilin-2 (815 aa).

Residues 1-12 (MLKPHPEHKEQP) show a composition bias toward basic and acidic residues. Disordered stretches follow at residues 1 to 31 (MLKP…MAEE) and 76 to 105 (QLTL…ISSS). The segment covering 13-25 (QDSFTPSGDSTPD) has biased composition (polar residues). Residues 91 to 105 (SSLAESQSSCQISSS) are compositionally biased toward low complexity. ARM repeat units lie at residues 317 to 357 (KGKP…NQCF), 360 to 399 (PDAK…NIVF), 402 to 442 (NENK…NLSS), 457 to 498 (PLTD…NLSS), 501 to 547 (PDGR…NLSY), 604 to 644 (PHGV…NLTA), 652 to 691 (AIAH…NISR), 693 to 737 (RELH…NLSQ), and 740 to 783 (ASNT…TLWR).

Belongs to the beta-catenin family.

The protein localises to the nucleus. The protein resides in the cell junction. It is found in the desmosome. Its subcellular location is the cytoplasm. Functionally, required for development of the heart, potentially via cell-cell adhesion and modulation of expression of cardiac precursor genes. Plays a role in desmosome cell-cell junctions and their intracellular connectivity. The chain is Plakophilin-2 from Danio rerio (Zebrafish).